Reading from the N-terminus, the 62-residue chain is Snaclec aspercetin subunit beta (62 aa).

Cysteine 2 and cysteine 13 are joined by a disulfide. The C-type lectin domain maps to 9–62 (YEGHCYRVFKPPKDWADAERFCSQQAKGGHLVSIERFGREDFVSNLITKNLQRG).

The protein belongs to the snaclec family. In terms of assembly, heterodimer; disulfide-linked. Expressed by the venom gland.

Its subcellular location is the secreted. In terms of biological role, snaclec that binds to von Willebrand factor (VWF) and induces its interaction with GPIbalpha (GP1BA) (via the vWF A1 domain), resulting in platelet aggregation. Intramuscular and intravenous injections in mice induce a dose-dependent drop in platelet count (thrombocytopenia). Pretreatment by intravenous injection by this protein in mice potentiates the hemorrhagic lesion in the skin provoked by the metalloproteinase BaP1 intradermally injected. This result is not observed when both BaP1 and this protein are injected simultaneously. This Bothrops asper (Terciopelo) protein is Snaclec aspercetin subunit beta.